The following is a 555-amino-acid chain: Glypican-6 (555 aa).

An N-terminal signal peptide occupies residues 1-23 (MPSWIRAVILPLSGLLLTLPAAA). Over residues 348–357 (PALRSARSAP) the composition is skewed to low complexity. Disordered stretches follow at residues 348–376 (PALR…PTTA) and 480–501 (GNDV…GSGC). Ser530 is lipidated: GPI-anchor amidated serine. The propeptide at 531-555 (ASKFSSSLISWSLVCMVLALQRLYR) is removed in mature form.

This sequence belongs to the glypican family. In terms of tissue distribution, in the cartilage growth-plate, gradient of expression with highest levels from the proliferative and pre-hypertrophic zones to lowest, if any, in the hypertrophic zones (at protein level).

The protein localises to the cell membrane. Its subcellular location is the secreted. The protein resides in the extracellular space. Cell surface proteoglycan that bears heparan sulfate. Putative cell surface coreceptor for growth factors, extracellular matrix proteins, proteases and anti-proteases. Enhances migration and invasion of cancer cells through WNT5A signaling. The polypeptide is Glypican-6 (Gpc6) (Mus musculus (Mouse)).